The chain runs to 272 residues: Centromere protein V-like protein 1 (272 aa).

A compositionally biased stretch (basic residues) spans 1 to 17 (MGRVRNRATAQRRRRKR). 2 disordered regions span residues 1 to 23 (MGRV…DPPA) and 65 to 95 (RRVR…KDLD). The segment covering 79 to 90 (APTPDPPGPAPS) has biased composition (pro residues). In terms of domain architecture, CENP-V/GFA spans 133-246 (HTGGCHCGAV…EEVGGGDPGE (114 aa)). Positions 137, 139, 157, 159, 162, 201, and 204 each coordinate Zn(2+). The interval 240–272 (GGGDPGEEAAEEHKAIHKTSSQSAPACPREQEQ) is disordered.

The protein belongs to the Gfa family. Zn(2+) is required as a cofactor.

The chain is Centromere protein V-like protein 1 from Homo sapiens (Human).